Reading from the N-terminus, the 458-residue chain is Homogentisate 1,2-dioxygenase (458 aa).

His308 serves as the catalytic Proton acceptor. Positions 351 and 357 each coordinate Fe cation. Tyr366 and His387 together coordinate homogentisate. A Fe cation-binding site is contributed by His387.

This sequence belongs to the homogentisate dioxygenase family. Hexamer; dimer of trimers. The cofactor is Fe cation.

The catalysed reaction is homogentisate + O2 = 4-maleylacetoacetate + H(+). It functions in the pathway amino-acid degradation; L-phenylalanine degradation; acetoacetate and fumarate from L-phenylalanine: step 4/6. Involved in the catabolism of homogentisate (2,5-dihydroxyphenylacetate or 2,5-OH-PhAc), a central intermediate in the degradation of phenylalanine and tyrosine. Catalyzes the oxidative ring cleavage of the aromatic ring of homogentisate to yield maleylacetoacetate. The protein is Homogentisate 1,2-dioxygenase of Xanthomonas axonopodis pv. citri (strain 306).